The chain runs to 299 residues: Tyrosine recombinase XerC (299 aa).

A Core-binding (CB) domain is found at Met1–Asn85. The Tyr recombinase domain maps to Arg106–Asp285. Active-site residues include Arg146, Lys170, His237, Arg240, and His263. Catalysis depends on Tyr272, which acts as the O-(3'-phospho-DNA)-tyrosine intermediate.

The protein belongs to the 'phage' integrase family. XerC subfamily. As to quaternary structure, forms a cyclic heterotetrameric complex composed of two molecules of XerC and two molecules of XerD.

It is found in the cytoplasm. Site-specific tyrosine recombinase, which acts by catalyzing the cutting and rejoining of the recombining DNA molecules. The XerC-XerD complex is essential to convert dimers of the bacterial chromosome into monomers to permit their segregation at cell division. It also contributes to the segregational stability of plasmids. This is Tyrosine recombinase XerC from Pseudomonas putida (strain ATCC 700007 / DSM 6899 / JCM 31910 / BCRC 17059 / LMG 24140 / F1).